Here is a 247-residue protein sequence, read N- to C-terminus: tRNA uridine(34) hydroxylase (247 aa).

The Rhodanese domain maps to 124–218 (TKQDVIVIDT…YLEDTQNKNN (95 aa)). Cys178 (cysteine persulfide intermediate) is an active-site residue.

This sequence belongs to the TrhO family.

The enzyme catalyses uridine(34) in tRNA + AH2 + O2 = 5-hydroxyuridine(34) in tRNA + A + H2O. Catalyzes oxygen-dependent 5-hydroxyuridine (ho5U) modification at position 34 in tRNAs. This is tRNA uridine(34) hydroxylase from Rickettsia africae (strain ESF-5).